A 342-amino-acid polypeptide reads, in one-letter code: Holliday junction branch migration complex subunit RuvB (342 aa).

Residues 1–184 (MDNERVITAV…FGIVQRLEFY (184 aa)) form a large ATPase domain (RuvB-L) region. Residues I23, R24, G65, K68, T69, T70, 131 to 133 (EDY), R174, Y184, and R221 contribute to the ATP site. T69 is a Mg(2+) binding site. The segment at 185-255 (SVDDLSGIVS…IAQRALDMLE (71 aa)) is small ATPAse domain (RuvB-S). The head domain (RuvB-H) stretch occupies residues 258-342 (SCGLDGTDRR…PRQDGDLFND (85 aa)). The DNA site is built by R313 and R318.

The protein belongs to the RuvB family. Homohexamer. Forms an RuvA(8)-RuvB(12)-Holliday junction (HJ) complex. HJ DNA is sandwiched between 2 RuvA tetramers; dsDNA enters through RuvA and exits via RuvB. An RuvB hexamer assembles on each DNA strand where it exits the tetramer. Each RuvB hexamer is contacted by two RuvA subunits (via domain III) on 2 adjacent RuvB subunits; this complex drives branch migration. In the full resolvosome a probable DNA-RuvA(4)-RuvB(12)-RuvC(2) complex forms which resolves the HJ.

The protein resides in the cytoplasm. It catalyses the reaction ATP + H2O = ADP + phosphate + H(+). The RuvA-RuvB-RuvC complex processes Holliday junction (HJ) DNA during genetic recombination and DNA repair, while the RuvA-RuvB complex plays an important role in the rescue of blocked DNA replication forks via replication fork reversal (RFR). RuvA specifically binds to HJ cruciform DNA, conferring on it an open structure. The RuvB hexamer acts as an ATP-dependent pump, pulling dsDNA into and through the RuvAB complex. RuvB forms 2 homohexamers on either side of HJ DNA bound by 1 or 2 RuvA tetramers; 4 subunits per hexamer contact DNA at a time. Coordinated motions by a converter formed by DNA-disengaged RuvB subunits stimulates ATP hydrolysis and nucleotide exchange. Immobilization of the converter enables RuvB to convert the ATP-contained energy into a lever motion, pulling 2 nucleotides of DNA out of the RuvA tetramer per ATP hydrolyzed, thus driving DNA branch migration. The RuvB motors rotate together with the DNA substrate, which together with the progressing nucleotide cycle form the mechanistic basis for DNA recombination by continuous HJ branch migration. Branch migration allows RuvC to scan DNA until it finds its consensus sequence, where it cleaves and resolves cruciform DNA. In Alcanivorax borkumensis (strain ATCC 700651 / DSM 11573 / NCIMB 13689 / SK2), this protein is Holliday junction branch migration complex subunit RuvB.